A 202-amino-acid chain; its full sequence is MSRYTGPKIRIIRRLGELPALTTKKVKNNYPPGREWSTNEELSEYAIRLQEKQKIRFNYGINEKQLRRYVKKAKKSRGSTGSYLLNLLEMRLDNIVLRAGLAPTIAASRQLVSHKHIEVNNKIVNIPSFQCSIGDTIHVKKSNKSRQLIDLNSRRDTTKFFPKYLEVNKDNMGARVVKTMDKQDVNLTINELLVVEFYSRKG.

In terms of domain architecture, S4 RNA-binding spans 90-152 (MRLDNIVLRA…NKSRQLIDLN (63 aa)).

It belongs to the universal ribosomal protein uS4 family. In terms of assembly, part of the 30S ribosomal subunit. Contacts protein S5. The interaction surface between S4 and S5 is involved in control of translational fidelity.

It is found in the plastid. Its subcellular location is the chloroplast. Functionally, one of the primary rRNA binding proteins, it binds directly to 16S rRNA where it nucleates assembly of the body of the 30S subunit. Its function is as follows. With S5 and S12 plays an important role in translational accuracy. The protein is Small ribosomal subunit protein uS4c-1 of Cyanidium caldarium (Red alga).